Consider the following 439-residue polypeptide: Protein translocase subunit SecY (439 aa).

10 helical membrane passes run 19 to 39, 68 to 88, 116 to 136, 151 to 171, 176 to 196, 216 to 236, 269 to 289, 312 to 332, 373 to 393, and 396 to 416; these read ILFT…TVPG, YSLF…VQLL, YITL…FQAM, LMIG…GEQI, FGSG…PSAV, WLFV…TTFV, VIPV…LQFL, WTGM…YSFV, VGAL…NVWG, and KIVA…IQAV.

The protein belongs to the SecY/SEC61-alpha family. In terms of assembly, component of the Sec protein translocase complex. Heterotrimer consisting of SecY, SecE and SecG subunits. The heterotrimers can form oligomers, although 1 heterotrimer is thought to be able to translocate proteins. Interacts with the ribosome. Interacts with SecDF, and other proteins may be involved. Interacts with SecA.

Its subcellular location is the cell membrane. Functionally, the central subunit of the protein translocation channel SecYEG. Consists of two halves formed by TMs 1-5 and 6-10. These two domains form a lateral gate at the front which open onto the bilayer between TMs 2 and 7, and are clamped together by SecE at the back. The channel is closed by both a pore ring composed of hydrophobic SecY resides and a short helix (helix 2A) on the extracellular side of the membrane which forms a plug. The plug probably moves laterally to allow the channel to open. The ring and the pore may move independently. This Lactococcus lactis subsp. lactis (strain IL1403) (Streptococcus lactis) protein is Protein translocase subunit SecY.